The chain runs to 148 residues: Isotocin-neurophysin IT 2 (148 aa).

An N-terminal signal peptide occupies residues 1 to 20; that stretch reads MSGSMSSVFSLLYLLSVCSA. Cys-21 and Cys-26 are oxidised to a cystine. Position 29 is a glycine amide (Gly-29). 7 cysteine pairs are disulfide-bonded: Cys-42–Cys-86, Cys-45–Cys-59, Cys-53–Cys-76, Cys-60–Cys-66, Cys-93–Cys-105, Cys-99–Cys-117, and Cys-106–Cys-111.

This sequence belongs to the vasopressin/oxytocin family.

In terms of biological role, isotocin causes contraction of smooth muscles. This chain is Isotocin-neurophysin IT 2, found in Catostomus commersonii (White sucker).